The sequence spans 193 residues: Xanthine phosphoribosyltransferase (193 aa).

Residues leucine 20 and asparagine 27 each coordinate xanthine. A 5-phospho-alpha-D-ribose 1-diphosphate-binding site is contributed by 128-132 (ANGDA). Lysine 156 is a binding site for xanthine.

The protein belongs to the purine/pyrimidine phosphoribosyltransferase family. Xpt subfamily. As to quaternary structure, homodimer.

It is found in the cytoplasm. The catalysed reaction is XMP + diphosphate = xanthine + 5-phospho-alpha-D-ribose 1-diphosphate. The protein operates within purine metabolism; XMP biosynthesis via salvage pathway; XMP from xanthine: step 1/1. In terms of biological role, converts the preformed base xanthine, a product of nucleic acid breakdown, to xanthosine 5'-monophosphate (XMP), so it can be reused for RNA or DNA synthesis. This is Xanthine phosphoribosyltransferase from Staphylococcus saprophyticus subsp. saprophyticus (strain ATCC 15305 / DSM 20229 / NCIMB 8711 / NCTC 7292 / S-41).